Reading from the N-terminus, the 179-residue chain is Large ribosomal subunit protein uL5 (179 aa).

The protein belongs to the universal ribosomal protein uL5 family. Part of the 50S ribosomal subunit; part of the 5S rRNA/L5/L18/L25 subcomplex. Contacts the 5S rRNA and the P site tRNA. Forms a bridge to the 30S subunit in the 70S ribosome.

Its function is as follows. This is one of the proteins that bind and probably mediate the attachment of the 5S RNA into the large ribosomal subunit, where it forms part of the central protuberance. In the 70S ribosome it contacts protein S13 of the 30S subunit (bridge B1b), connecting the 2 subunits; this bridge is implicated in subunit movement. Contacts the P site tRNA; the 5S rRNA and some of its associated proteins might help stabilize positioning of ribosome-bound tRNAs. This is Large ribosomal subunit protein uL5 from Burkholderia cenocepacia (strain HI2424).